Consider the following 629-residue polypeptide: Methionine--tRNA ligase (629 aa).

The 'HIGH' region motif lies at 10 to 20 (YYVNSEPHIGS). Residues Cys-125, Cys-128, Cys-146, and Cys-149 each contribute to the Zn(2+) site. The 'KMSKS' region motif lies at 297–301 (KISKS). Lys-300 is a binding site for ATP. A tRNA-binding domain is found at 529-629 (DFSKVDLRIA…GEITPGAKVS (101 aa)).

This sequence belongs to the class-I aminoacyl-tRNA synthetase family. MetG type 2A subfamily. As to quaternary structure, homodimer. Zn(2+) serves as cofactor.

The protein resides in the cytoplasm. The enzyme catalyses tRNA(Met) + L-methionine + ATP = L-methionyl-tRNA(Met) + AMP + diphosphate. Functionally, is required not only for elongation of protein synthesis but also for the initiation of all mRNA translation through initiator tRNA(fMet) aminoacylation. This is Methionine--tRNA ligase (metG) from Thermotoga maritima (strain ATCC 43589 / DSM 3109 / JCM 10099 / NBRC 100826 / MSB8).